The primary structure comprises 356 residues: Chorismate synthase (356 aa).

An NADP(+)-binding site is contributed by arginine 46. FMN is bound by residues 122-124 (RSS), 234-235 (NG), glycine 274, 289-293 (KPTPS), and arginine 315.

It belongs to the chorismate synthase family. In terms of assembly, homotetramer. It depends on FMNH2 as a cofactor.

It carries out the reaction 5-O-(1-carboxyvinyl)-3-phosphoshikimate = chorismate + phosphate. It functions in the pathway metabolic intermediate biosynthesis; chorismate biosynthesis; chorismate from D-erythrose 4-phosphate and phosphoenolpyruvate: step 7/7. In terms of biological role, catalyzes the anti-1,4-elimination of the C-3 phosphate and the C-6 proR hydrogen from 5-enolpyruvylshikimate-3-phosphate (EPSP) to yield chorismate, which is the branch point compound that serves as the starting substrate for the three terminal pathways of aromatic amino acid biosynthesis. This reaction introduces a second double bond into the aromatic ring system. The polypeptide is Chorismate synthase (Campylobacter fetus subsp. fetus (strain 82-40)).